The sequence spans 389 residues: Probable tRNA sulfurtransferase (389 aa).

The THUMP domain occupies 57–165; that stretch reads DEALDRLSKI…EDETYIYHRV (109 aa). Residues 183–184, Lys267, Gly289, and Gln298 each bind ATP; that span reads LL.

This sequence belongs to the ThiI family.

It localises to the cytoplasm. The enzyme catalyses [ThiI sulfur-carrier protein]-S-sulfanyl-L-cysteine + a uridine in tRNA + 2 reduced [2Fe-2S]-[ferredoxin] + ATP + H(+) = [ThiI sulfur-carrier protein]-L-cysteine + a 4-thiouridine in tRNA + 2 oxidized [2Fe-2S]-[ferredoxin] + AMP + diphosphate. It carries out the reaction [ThiS sulfur-carrier protein]-C-terminal Gly-Gly-AMP + S-sulfanyl-L-cysteinyl-[cysteine desulfurase] + AH2 = [ThiS sulfur-carrier protein]-C-terminal-Gly-aminoethanethioate + L-cysteinyl-[cysteine desulfurase] + A + AMP + 2 H(+). It functions in the pathway cofactor biosynthesis; thiamine diphosphate biosynthesis. Catalyzes the ATP-dependent transfer of a sulfur to tRNA to produce 4-thiouridine in position 8 of tRNAs, which functions as a near-UV photosensor. Also catalyzes the transfer of sulfur to the sulfur carrier protein ThiS, forming ThiS-thiocarboxylate. This is a step in the synthesis of thiazole, in the thiamine biosynthesis pathway. The sulfur is donated as persulfide by IscS. The protein is Probable tRNA sulfurtransferase of Methanothermobacter thermautotrophicus (strain ATCC 29096 / DSM 1053 / JCM 10044 / NBRC 100330 / Delta H) (Methanobacterium thermoautotrophicum).